The chain runs to 378 residues: Erythronate-4-phosphate dehydrogenase (378 aa).

Residues Ser45 and Thr66 each contribute to the substrate site. Positions 146 and 175 each coordinate NAD(+). Arg208 is an active-site residue. Position 232 (Asp232) interacts with NAD(+). Residue Glu237 is part of the active site. The active-site Proton donor is His254. Gly257 is a binding site for NAD(+). Tyr258 is a substrate binding site.

Belongs to the D-isomer specific 2-hydroxyacid dehydrogenase family. PdxB subfamily. As to quaternary structure, homodimer.

It localises to the cytoplasm. The enzyme catalyses 4-phospho-D-erythronate + NAD(+) = (R)-3-hydroxy-2-oxo-4-phosphooxybutanoate + NADH + H(+). It participates in cofactor biosynthesis; pyridoxine 5'-phosphate biosynthesis; pyridoxine 5'-phosphate from D-erythrose 4-phosphate: step 2/5. In terms of biological role, catalyzes the oxidation of erythronate-4-phosphate to 3-hydroxy-2-oxo-4-phosphonooxybutanoate. The protein is Erythronate-4-phosphate dehydrogenase of Shigella boydii serotype 4 (strain Sb227).